The chain runs to 369 residues: Serine proteinase inhibitor 1 (369 aa).

The protein belongs to the serpin family. Poxviruses subfamily.

In terms of biological role, important in virulence. In Oryctolagus cuniculus (Rabbit), this protein is Serine proteinase inhibitor 1 (SPI-1).